The sequence spans 87 residues: Large ribosomal subunit protein bL27 (87 aa).

Residues 1–21 (MAHKKAGGSSRNGRDSESKRL) are disordered.

This sequence belongs to the bacterial ribosomal protein bL27 family.

This chain is Large ribosomal subunit protein bL27, found in Burkholderia ambifaria (strain MC40-6).